We begin with the raw amino-acid sequence, 282 residues long: Bifunctional protein FolD (282 aa).

NADP(+) is bound by residues 165 to 167 (GAS) and isoleucine 231.

Belongs to the tetrahydrofolate dehydrogenase/cyclohydrolase family. Homodimer.

It carries out the reaction (6R)-5,10-methylene-5,6,7,8-tetrahydrofolate + NADP(+) = (6R)-5,10-methenyltetrahydrofolate + NADPH. The enzyme catalyses (6R)-5,10-methenyltetrahydrofolate + H2O = (6R)-10-formyltetrahydrofolate + H(+). The protein operates within one-carbon metabolism; tetrahydrofolate interconversion. Functionally, catalyzes the oxidation of 5,10-methylenetetrahydrofolate to 5,10-methenyltetrahydrofolate and then the hydrolysis of 5,10-methenyltetrahydrofolate to 10-formyltetrahydrofolate. The chain is Bifunctional protein FolD from Francisella tularensis subsp. novicida (strain U112).